We begin with the raw amino-acid sequence, 498 residues long: Glycerol kinase (498 aa).

Residue threonine 11 participates in ADP binding. Positions 11, 12, and 13 each coordinate ATP. Threonine 11 serves as a coordination point for sn-glycerol 3-phosphate. Residue arginine 15 participates in ADP binding. Sn-glycerol 3-phosphate is bound by residues arginine 81, glutamate 82, tyrosine 133, and aspartate 242. Residues arginine 81, glutamate 82, tyrosine 133, aspartate 242, and glutamine 243 each contribute to the glycerol site. Residues threonine 264 and glycine 307 each coordinate ADP. Threonine 264, glycine 307, glutamine 311, and glycine 408 together coordinate ATP. Glycine 408 and asparagine 412 together coordinate ADP.

This sequence belongs to the FGGY kinase family.

It catalyses the reaction glycerol + ATP = sn-glycerol 3-phosphate + ADP + H(+). It participates in polyol metabolism; glycerol degradation via glycerol kinase pathway; sn-glycerol 3-phosphate from glycerol: step 1/1. Its activity is regulated as follows. Inhibited by fructose 1,6-bisphosphate (FBP). Its function is as follows. Key enzyme in the regulation of glycerol uptake and metabolism. Catalyzes the phosphorylation of glycerol to yield sn-glycerol 3-phosphate. The polypeptide is Glycerol kinase (Ralstonia pickettii (strain 12J)).